Consider the following 711-residue polypeptide: Polyribonucleotide nucleotidyltransferase (711 aa).

Mg(2+)-binding residues include Asp486 and Asp492. A KH domain is found at 553–612; the sequence is PRIHTIKINPDKIKDVIGKGGSVIRALTEETGTTIEIEDDGTVKIAATDGEKAKHAIRRI. Positions 622-690 constitute an S1 motif domain; sequence GRVYTGKVTR…RQGRIRLSIK (69 aa). The tract at residues 689 to 711 is disordered; sequence IKEATEQSQPAAAPEAPAAEQGE. The segment covering 694–711 has biased composition (low complexity); sequence EQSQPAAAPEAPAAEQGE.

It belongs to the polyribonucleotide nucleotidyltransferase family. As to quaternary structure, component of the RNA degradosome, which is a multiprotein complex involved in RNA processing and mRNA degradation. Mg(2+) is required as a cofactor.

It localises to the cytoplasm. It carries out the reaction RNA(n+1) + phosphate = RNA(n) + a ribonucleoside 5'-diphosphate. Involved in mRNA degradation. Catalyzes the phosphorolysis of single-stranded polyribonucleotides processively in the 3'- to 5'-direction. In Escherichia coli (strain SE11), this protein is Polyribonucleotide nucleotidyltransferase.